A 100-amino-acid polypeptide reads, in one-letter code: EKC/KEOPS complex subunit GON7 (100 aa).

At M1 the chain carries N-acetylmethionine. The segment at 61–100 is disordered; sequence AAAPDEDLDGDDEDDAEDENNIDNRTNFDGPSAKRPKTPS. The segment covering 64-81 has biased composition (acidic residues); that stretch reads PDEDLDGDDEDDAEDENN.

In terms of assembly, component of the EKC/KEOPS complex composed of at least GON7, TP53RK, TPRKB, OSGEP and LAGE3; the whole complex dimerizes.

It localises to the nucleus. Its function is as follows. Component of the EKC/KEOPS complex that is required for the formation of a threonylcarbamoyl group on adenosine at position 37 (t(6)A37) in tRNAs that read codons beginning with adenine. The complex is probably involved in the transfer of the threonylcarbamoyl moiety of threonylcarbamoyl-AMP (TC-AMP) to the N6 group of A37. GON7 plays a supporting role to the catalytic subunit OSGEP in the complex. The polypeptide is EKC/KEOPS complex subunit GON7 (Homo sapiens (Human)).